The sequence spans 93 residues: RNA-binding protein Hfq (93 aa).

Residues 11–71 (DVFLNHVRKS…ISTVMPGAPI (61 aa)) enclose the Sm domain.

This sequence belongs to the Hfq family. As to quaternary structure, homohexamer.

Its function is as follows. RNA chaperone that binds small regulatory RNA (sRNAs) and mRNAs to facilitate mRNA translational regulation in response to envelope stress, environmental stress and changes in metabolite concentrations. Also binds with high specificity to tRNAs. The sequence is that of RNA-binding protein Hfq from Granulibacter bethesdensis (strain ATCC BAA-1260 / CGDNIH1).